Reading from the N-terminus, the 430-residue chain is Dihydroorotase (430 aa).

The Zn(2+) site is built by H61 and H63. Substrate-binding positions include 63-65 and N95; that span reads HLR. D153, H180, and H233 together coordinate Zn(2+). N279 is a binding site for substrate. Residue D306 participates in Zn(2+) binding. The active site involves D306. A substrate-binding site is contributed by H310.

It belongs to the metallo-dependent hydrolases superfamily. DHOase family. Class I DHOase subfamily. Requires Zn(2+) as cofactor.

The enzyme catalyses (S)-dihydroorotate + H2O = N-carbamoyl-L-aspartate + H(+). It functions in the pathway pyrimidine metabolism; UMP biosynthesis via de novo pathway; (S)-dihydroorotate from bicarbonate: step 3/3. Its function is as follows. Catalyzes the reversible cyclization of carbamoyl aspartate to dihydroorotate. The protein is Dihydroorotase of Caldicellulosiruptor saccharolyticus (strain ATCC 43494 / DSM 8903 / Tp8T 6331).